The primary structure comprises 639 residues: UvrABC system protein C (639 aa).

A compositionally biased stretch (acidic residues) spans methionine 1 to aspartate 16. The segment at methionine 1–arginine 28 is disordered. A compositionally biased stretch (low complexity) spans glutamine 17–proline 27. Positions serine 42–isoleucine 120 constitute a GIY-YIG domain. One can recognise a UVR domain in the interval lysine 230–valine 265.

This sequence belongs to the UvrC family. As to quaternary structure, interacts with UvrB in an incision complex.

Its subcellular location is the cytoplasm. Functionally, the UvrABC repair system catalyzes the recognition and processing of DNA lesions. UvrC both incises the 5' and 3' sides of the lesion. The N-terminal half is responsible for the 3' incision and the C-terminal half is responsible for the 5' incision. This chain is UvrABC system protein C, found in Rhodospirillum rubrum (strain ATCC 11170 / ATH 1.1.1 / DSM 467 / LMG 4362 / NCIMB 8255 / S1).